A 425-amino-acid polypeptide reads, in one-letter code: Argininosuccinate synthase (425 aa).

Residues 7 to 15 (AYSGGLDTS) and Ala33 contribute to the ATP site. Tyr84 serves as a coordination point for L-citrulline. Gly114 provides a ligand contact to ATP. Residues Thr116, Asn120, and Asp121 each contribute to the L-aspartate site. Asn120 contributes to the L-citrulline binding site. L-citrulline-binding residues include Arg124, Ser177, Ser186, Glu267, and Tyr279.

The protein belongs to the argininosuccinate synthase family. Type 1 subfamily. Homotetramer.

The protein resides in the cytoplasm. It catalyses the reaction L-citrulline + L-aspartate + ATP = 2-(N(omega)-L-arginino)succinate + AMP + diphosphate + H(+). Its pathway is amino-acid biosynthesis; L-arginine biosynthesis; L-arginine from L-ornithine and carbamoyl phosphate: step 2/3. In Pseudothermotoga lettingae (strain ATCC BAA-301 / DSM 14385 / NBRC 107922 / TMO) (Thermotoga lettingae), this protein is Argininosuccinate synthase.